The sequence spans 589 residues: MNAPQENQASQDDADVLIIGAGPVGLTLANTLGMAGVRVIVAEKLPRIIDYPRAIGIDDESLRTLQAAGLSDQVQAHITPHHWMRFYTASGQCFASIEPRTDEYGWSRRNAFIQPQVDDILYRGLQRFDQVQVLLGHELHSFSQDDAGITATLKDADGVERTLRAKYLVASDGGNSLVRRMLNVAFEGRTKPNQWIVVDVRNDPLGTPHIDMHCDPQRPYVSAALPHGIRRFEFMVMPGETEEQLSRPENLAQLMRKVVADPDKVDYIRKRVYTHNARLAAQFRVDRILLAGDAAHIMPVWQGQGYNSGMRDASNLAWKLAMVVKGEARSDLLDSYEQERRDHARSMIHLSEVAGDIFAPESHTAAKVRDTVMLALNAVPPVKQYFAEMRFKPMPRYEQGVVLHHTGTGNQGVRTPFAGLLDRSGNTPLGRLLGLMAEKKESLVGRLVHGLETAASSPVGRMFIQPRVATANGHSGLLDDFVGLNFCILAWGTDPSYGMDEEALNFWQRLGARFIRAMPAGQLLHPTPTRDGVLTVGDEQGRLKDWFSAQGKSVVFVRPDRFVAALASPQEVSAVTRQMARVLHSPLEA.

Residues 15–44 (DVLIIGAGPVGLTLANTLGMAGVRVIVAEK) and 283–293 (FRVDRILLAGD) contribute to the FAD site.

This sequence belongs to the PheA/TfdB FAD monooxygenase family. Requires FAD as cofactor.

It catalyses the reaction 3-(3-hydroxyphenyl)propanoate + NADH + O2 + H(+) = 3-(2,3-dihydroxyphenyl)propanoate + NAD(+) + H2O. It carries out the reaction (2E)-3-(3-hydroxyphenyl)prop-2-enoate + NADH + O2 + H(+) = (2E)-3-(2,3-dihydroxyphenyl)prop-2-enoate + NAD(+) + H2O. The protein operates within aromatic compound metabolism; 3-phenylpropanoate degradation. In terms of biological role, catalyzes the insertion of one atom of molecular oxygen into position 2 of the phenyl ring of 3-(3-hydroxyphenyl)propionate (3-HPP) and hydroxycinnamic acid (3HCI). This chain is 3-(3-hydroxy-phenyl)propionate/3-hydroxycinnamic acid hydroxylase, found in Comamonas testosteroni (Pseudomonas testosteroni).